The sequence spans 549 residues: Cilia- and flagella-associated protein 45 (549 aa).

Residues 1–29 form a disordered region; the sequence is MPLSPAGVLSSTSTASNRSRNRPRYRTKA. 3 coiled-coil regions span residues 119-232, 259-393, and 434-522; these read REEL…MMEV, IVEQ…KRNQ, and AVQV…KIEE. The interval 388–416 is disordered; the sequence is RAKRNQEVADREWRRKEKENAQKKMETEA.

This sequence belongs to the CFAP45 family. As to quaternary structure, microtubule inner protein component of sperm flagellar doublet microtubules. Interacts with AK8; dimerization with AK8 may create a cavity at the interface of the dimer that can accommodate AMP. Interacts with CFAP52. Interacts with ENKUR. Directly interacts with DNALI1. Interacts with DNAH11. Interacts with DNAI1. In terms of tissue distribution, expressed in respiratory cells (at protein level).

It localises to the cytoplasm. The protein resides in the cytoskeleton. The protein localises to the cilium axoneme. Its subcellular location is the flagellum axoneme. It is found in the cell projection. It localises to the cilium. The protein resides in the flagellum. Functionally, microtubule inner protein (MIP) part of the dynein-decorated doublet microtubules (DMTs) in cilia axoneme, which is required for motile cilia beating. It is an AMP-binding protein that may facilitate dynein ATPase-dependent ciliary and flagellar beating via adenine nucleotide homeostasis. May function as a donor of AMP to AK8 and hence promote ADP production. The polypeptide is Cilia- and flagella-associated protein 45 (CFAP45) (Sus scrofa (Pig)).